The sequence spans 379 residues: Chaperone protein DnaJ (379 aa).

Residues 5–70 (DYYELLEVSR…QKRAAYDQFG (66 aa)) form the J domain. Residues 135–213 (GKEVEITVPR…CHGQGRVRES (79 aa)) form a CR-type zinc finger. Residues cysteine 148, cysteine 151, cysteine 165, cysteine 168, cysteine 187, cysteine 190, cysteine 201, and cysteine 204 each coordinate Zn(2+). CXXCXGXG motif repeat units follow at residues 148 to 155 (CTVCEGSG), 165 to 172 (CETCQGMG), 187 to 194 (CPTCHGEG), and 201 to 208 (CASCHGQG).

Belongs to the DnaJ family. In terms of assembly, homodimer. It depends on Zn(2+) as a cofactor.

It localises to the cytoplasm. In terms of biological role, participates actively in the response to hyperosmotic and heat shock by preventing the aggregation of stress-denatured proteins and by disaggregating proteins, also in an autonomous, DnaK-independent fashion. Unfolded proteins bind initially to DnaJ; upon interaction with the DnaJ-bound protein, DnaK hydrolyzes its bound ATP, resulting in the formation of a stable complex. GrpE releases ADP from DnaK; ATP binding to DnaK triggers the release of the substrate protein, thus completing the reaction cycle. Several rounds of ATP-dependent interactions between DnaJ, DnaK and GrpE are required for fully efficient folding. Also involved, together with DnaK and GrpE, in the DNA replication of plasmids through activation of initiation proteins. The polypeptide is Chaperone protein DnaJ (Legionella pneumophila (strain Lens)).